A 305-amino-acid polypeptide reads, in one-letter code: Carbamate kinase (305 aa).

It belongs to the carbamate kinase family.

The protein resides in the cytoplasm. The catalysed reaction is hydrogencarbonate + NH4(+) + ATP = carbamoyl phosphate + ADP + H2O + H(+). It functions in the pathway metabolic intermediate metabolism; carbamoyl phosphate degradation; CO(2) and NH(3) from carbamoyl phosphate: step 1/1. The sequence is that of Carbamate kinase (arcC) from Thermoplasma acidophilum (strain ATCC 25905 / DSM 1728 / JCM 9062 / NBRC 15155 / AMRC-C165).